Reading from the N-terminus, the 104-residue chain is Iron-sulfur cluster assembly protein CyaY (104 aa).

This sequence belongs to the frataxin family.

Its function is as follows. Involved in iron-sulfur (Fe-S) cluster assembly. May act as a regulator of Fe-S biogenesis. The sequence is that of Iron-sulfur cluster assembly protein CyaY from Aeromonas salmonicida (strain A449).